A 246-amino-acid polypeptide reads, in one-letter code: UPF0309 protein ABC0887 (246 aa).

Positions 33–212 constitute an SIS domain; it reads MVHAIKEGKS…VLKMIEQLEE (180 aa).

Belongs to the UPF0309 family.

The polypeptide is UPF0309 protein ABC0887 (Shouchella clausii (strain KSM-K16) (Alkalihalobacillus clausii)).